The sequence spans 259 residues: Protein N-terminal and lysine N-methyltransferase efm7 (259 aa).

Residues Trp56, 83 to 85 (GAA), Asp105, Trp139, and Ala163 each bind S-adenosyl-L-methionine.

The protein belongs to the class I-like SAM-binding methyltransferase superfamily. EFM7 family.

Its subcellular location is the cytoplasm. Its function is as follows. S-adenosyl-L-methionine-dependent protein methyltransferase that trimethylates the N-terminal glycine 'Gly-2' of elongation factor 1-alpha, before also catalyzing the mono- and dimethylation of 'Lys-3'. In Aspergillus fumigatus (strain ATCC MYA-4609 / CBS 101355 / FGSC A1100 / Af293) (Neosartorya fumigata), this protein is Protein N-terminal and lysine N-methyltransferase efm7.